Consider the following 433-residue polypeptide: N-lysine methyltransferase SMYD2 (433 aa).

Positions 7–241 constitute an SET domain; the sequence is GGLERFCSAG…PGDEVFTSYI (235 aa). 17–19 is a binding site for S-adenosyl-L-methionine; it reads KGR. Zn(2+) contacts are provided by C52, C55, C65, C68, C74, C78, H86, and C90. The MYND-type zinc-finger motif lies at 52 to 90; sequence CECCFARKEGLSKCGRCKQAFYCDVECQKEDWPLHKLEC. S-adenosyl-L-methionine-binding positions include H137, 206-207, and 258-260; these read NH and YFF. At S283 the chain carries Phosphoserine.

Belongs to the class V-like SAM-binding methyltransferase superfamily. In terms of assembly, interacts with RNA polymerase II and HELZ. Interacts with SIN3A and HDAC1. Interacts (via MYND-type zinc finger) with EPB41L3. Interacts (via SET domain) with p53/TP53. Interacts with RB1 and HSP90AA1.

The protein localises to the cytoplasm. Its subcellular location is the cytosol. The protein resides in the nucleus. It carries out the reaction L-lysyl(4)-[histone H3] + 3 S-adenosyl-L-methionine = N(6),N(6),N(6)-trimethyl-L-lysyl(4)-[histone H3] + 3 S-adenosyl-L-homocysteine + 3 H(+). The enzyme catalyses L-lysyl-[protein] + S-adenosyl-L-methionine = N(6)-methyl-L-lysyl-[protein] + S-adenosyl-L-homocysteine + H(+). In terms of biological role, protein-lysine N-methyltransferase that methylates both histones and non-histone proteins, including p53/TP53 and RB1. Specifically trimethylates histone H3 'Lys-4' (H3K4me3) in vivo. The activity requires interaction with HSP90alpha. Shows even higher methyltransferase activity on p53/TP53. Monomethylates 'Lys-370' of p53/TP53, leading to decreased DNA-binding activity and subsequent transcriptional regulation activity of p53/TP53. Monomethylates RB1 at 'Lys-860'. The chain is N-lysine methyltransferase SMYD2 (Smyd2) from Rattus norvegicus (Rat).